Here is a 318-residue protein sequence, read N- to C-terminus: NADH-ubiquinone oxidoreductase chain 1 (318 aa).

A run of 8 helical transmembrane segments spans residues 3–23 (LINLLAMIVPVLLAVAFLTLL), 69–89 (MLFIIAPTLALTLALTMWTPL), 102–122 (MLFILALSSLAVYTIMWSGWA), 144–164 (VTLAIIILSLLLMNGSFTLLS), 171–191 (YIWLLIPSWPLAMMWFISTLA), 222–242 (LFFLAEYANIIMMNALTIILF), 253–273 (ELYTINFTIKTLLFTAFFLWI), and 294–314 (LPLTLVMCMWHVALPIMLAGI).

This sequence belongs to the complex I subunit 1 family. As to quaternary structure, core subunit of respiratory chain NADH dehydrogenase (Complex I) which is composed of 45 different subunits.

The protein resides in the mitochondrion inner membrane. The catalysed reaction is a ubiquinone + NADH + 5 H(+)(in) = a ubiquinol + NAD(+) + 4 H(+)(out). Its function is as follows. Core subunit of the mitochondrial membrane respiratory chain NADH dehydrogenase (Complex I) which catalyzes electron transfer from NADH through the respiratory chain, using ubiquinone as an electron acceptor. Essential for the catalytic activity and assembly of complex I. The protein is NADH-ubiquinone oxidoreductase chain 1 (MT-ND1) of Murina suilla (Brown tube-nosed bat).